Here is a 409-residue protein sequence, read N- to C-terminus: Tryptophan synthase beta chain 1 (409 aa).

Lys-104 is subject to N6-(pyridoxal phosphate)lysine.

Belongs to the TrpB family. As to quaternary structure, tetramer of two alpha and two beta chains. Requires pyridoxal 5'-phosphate as cofactor.

It catalyses the reaction (1S,2R)-1-C-(indol-3-yl)glycerol 3-phosphate + L-serine = D-glyceraldehyde 3-phosphate + L-tryptophan + H2O. It functions in the pathway amino-acid biosynthesis; L-tryptophan biosynthesis; L-tryptophan from chorismate: step 5/5. The beta subunit is responsible for the synthesis of L-tryptophan from indole and L-serine. This Nostoc sp. (strain PCC 7120 / SAG 25.82 / UTEX 2576) protein is Tryptophan synthase beta chain 1 (trpB1).